A 602-amino-acid polypeptide reads, in one-letter code: Leucine-rich repeat-containing protein 40 (602 aa).

The tract at residues 1–22 (MSRLKRIAGQDPRAGFKEGGRD) is disordered. Ser71 is modified (phosphoserine). LRR repeat units lie at residues 83 to 104 (DLTKLIISNNKLQSLTDDLRLL), 106 to 127 (ALTVLDIHDNQLTSLPSAIREL), 129 to 150 (NLQKLNVSHNKLKILPEEITNL), 152 to 173 (NLKCLYLQHNELTCISEGFEQF), 175 to 196 (NLEDLDLSNNRLTTVPASFSSL), 198 to 219 (SLVRLNLSSNELKSLPAEINRM), 221 to 242 (RLKHLDCNSNLLETIPPELAGM), 244 to 265 (SLELLYLRRNKLRFLPEFPSCS), 266 to 286 (LLKELHVGENQIEMLEAEHLK), 290 to 311 (SILVLDLRDNKLKSVPDEIILL), 313 to 335 (SLERLDLSNNDISSLPYSLGNLH), 336 to 356 (LKFLALEGNPLRTIRREIINK), 400 to 421 (TLKILDYSDKQATLIPDEVFDA), 426 to 447 (IITSINFSKNQLCEIPKRMVEL), 450 to 472 (MVSDVNLSFNKLSFISLELCVLQ), 473 to 494 (KLTFLDLRNNFLNSLPEEVESL), 496 to 517 (RLQTINLSFNRFKMLPEVLYRI), 519 to 540 (TLETILISNNQVGSVDPQKMKM), 543 to 564 (NLTTLDLQNNDLLQIPPELGNC), and 566 to 586 (NLRTLLLDGNPFRVPRAAILM).

The sequence is that of Leucine-rich repeat-containing protein 40 (LRRC40) from Pongo abelii (Sumatran orangutan).